The sequence spans 327 residues: Fructose-1,6-bisphosphatase class 1 (327 aa).

Glutamate 84, aspartate 103, leucine 105, and aspartate 106 together coordinate Mg(2+). Substrate contacts are provided by residues aspartate 106–serine 109, asparagine 197, and lysine 263. Glutamate 269 lines the Mg(2+) pocket.

Belongs to the FBPase class 1 family. In terms of assembly, homotetramer. It depends on Mg(2+) as a cofactor.

The protein localises to the cytoplasm. The catalysed reaction is beta-D-fructose 1,6-bisphosphate + H2O = beta-D-fructose 6-phosphate + phosphate. It participates in carbohydrate biosynthesis; gluconeogenesis. The sequence is that of Fructose-1,6-bisphosphatase class 1 from Idiomarina loihiensis (strain ATCC BAA-735 / DSM 15497 / L2-TR).